The chain runs to 145 residues: Photosystem I reaction center subunit XI (145 aa).

The next 3 membrane-spanning stretches (helical) occupy residues 48-68 (LEIGMAHGYFLIGPFYILGPL), 75-95 (LLVGLFSAFGLILILTLGLTI), and 125-145 (IGAFGGASVAYVLLDNISFFA).

The protein belongs to the PsaL family.

The protein resides in the plastid. It localises to the chloroplast thylakoid membrane. This chain is Photosystem I reaction center subunit XI, found in Emiliania huxleyi (Coccolithophore).